The following is a 560-amino-acid chain: Vesicular glutamate transporter 1 (560 aa).

Over 1–63 (MEFRQEEFRK…CTCFGLPRRY (63 aa)) the chain is Cytoplasmic. The helical transmembrane segment at 64–84 (IIAIMSGLGFCISFGIRCNLG) threads the bilayer. Residues 85-116 (VAIVSMVNNSTTHRGGHVVMQKAQFNWDPETV) are Extracellular-facing. Residues 117-137 (GLIHGSFFWGYIVTQIPGGFI) form a helical membrane-spanning segment. Residues 138 to 140 (CQK) are Cytoplasmic-facing. Residues 141–161 (FAANRVFGFAIVATSTLNMLI) form a helical membrane-spanning segment. Residues 162–169 (PSAARVHY) are Extracellular-facing. The helical transmembrane segment at 170–190 (GCVIFVRILQGLVEGVTYPAC) threads the bilayer. Over 191 to 208 (HGIWSKWAPPLERSRLAT) the chain is Cytoplasmic. A helical membrane pass occupies residues 209–229 (TAFCGSYAGAVVAMPLAGVLV). At 230–236 (QYSGWSS) the chain is on the extracellular side. Residues 237–257 (VFYVYGSFGIFWYLFWLLVSY) form a helical membrane-spanning segment. Over 258 to 302 (ESPALHPSISEEERKYIEDAIGESAKLMNPVTKFNTPWRRFFTSM) the chain is Cytoplasmic. A helical transmembrane segment spans residues 303–323 (PVYAIIVANFCRSWTFYLLLI). At 324–341 (SQPAYFEEVFGFEISKVG) the chain is on the extracellular side. A helical transmembrane segment spans residues 342 to 362 (LVSALPHLVMTIIVPIGGQIA). At 363-378 (DFLRSRRIMSTTNVRK) the chain is on the cytoplasmic side. Residues 379 to 399 (LMNCGGFGMEATLLLVVGYSH) traverse the membrane as a helical segment. At 400-401 (SK) the chain is on the extracellular side. The chain crosses the membrane as a helical span at residues 402 to 422 (GVAISFLVLAVGFSGFAISGF). Residues 423-435 (NVNHLDIAPRYAS) lie on the Cytoplasmic side of the membrane. Residues 436–456 (ILMGISNGVGTLSGMVCPIIV) form a helical membrane-spanning segment. Over 457 to 469 (GAMTKHKTREEWQ) the chain is Extracellular. Residues 470 to 490 (YVFLIASLVHYGGVIFYGVFA) form a helical membrane-spanning segment. Topologically, residues 491–560 (SGEKQPWAEP…PRPPPPVRDY (70 aa)) are cytoplasmic. Positions 497 to 560 (WAEPEEMSEE…PRPPPPVRDY (64 aa)) are disordered. Phosphoserine is present on serine 504. The span at 520-529 (DESEMEDEAE) shows a compositional bias: acidic residues. 2 stretches are compositionally biased toward pro residues: residues 531–540 (PGAPPAPPPS) and 550–560 (PPRPPPPVRDY).

The protein belongs to the major facilitator superfamily. Sodium/anion cotransporter family. VGLUT subfamily. As to quaternary structure, interacts with SHANK3.

The protein localises to the cytoplasmic vesicle. It is found in the secretory vesicle. It localises to the synaptic vesicle membrane. The protein resides in the cell membrane. Its subcellular location is the synapse. The protein localises to the synaptosome. It carries out the reaction L-glutamate(out) = L-glutamate(in). The enzyme catalyses chloride(in) = chloride(out). The catalysed reaction is 3 Na(+)(out) + phosphate(out) = 3 Na(+)(in) + phosphate(in). It catalyses the reaction phosphate(in) = phosphate(out). It carries out the reaction K(+)(in) + H(+)(out) = K(+)(out) + H(+)(in). Chloride channel activity is allosterically activated by lumenal H(+) and Cl(-) leading to synaptic vesicles acidification. The L-glutamate transport activity is allosterically activated by lumenal H(+) and Cl(-). The allosteric activation by H(+) efficiently prevents non-vesicular efflux across the plasma membrane, thereby restricting L-glutamate transport activity to acidic membranes such as synaptic vesicles. In terms of biological role, multifunctional transporter that transports L-glutamate as well as multiple ions such as chloride, proton, potassium, sodium and phosphate. At the synaptic vesicle membrane, mainly functions as an uniporter which transports preferentially L-glutamate but also phosphate from the cytoplasm into synaptic vesicles at presynaptic nerve terminals of excitatory neural cells. The L-glutamate or phosphate uniporter activity is electrogenic and is driven by the proton electrochemical gradient, mainly by the electrical gradient established by the vacuolar H(+)-ATPase across the synaptic vesicle membrane. In addition, functions as a chloride channel that allows a chloride permeation through the synaptic vesicle membrane that affects the proton electrochemical gradient and promotes synaptic vesicles acidification. Moreover, may function as a K(+)/H(+) antiport allowing to maintain the electrical gradient and to decrease chemical gradient and therefore sustain vesicular glutamate uptake. The vesicular K(+)/H(+) antiport activity is electroneutral. At the plasma membrane, following exocytosis, functions as a symporter of Na(+) and phosphate from the extracellular space to the cytoplasm allowing synaptic phosphate homeostasis regulation. The symporter activity is driven by an inside negative membrane potential and is electrogenic. Is necessary for synaptic signaling of visual-evoked responses from photoreceptors. This is Vesicular glutamate transporter 1 from Bos taurus (Bovine).